Consider the following 354-residue polypeptide: MGICKCKKRSEDFCFNHKKFICDSCVVADHSICYIKSYVSWLTDCEFEDSVCGVCKGKFDVDDNDDSVRLLCYHLYHPECIDVYVAALPQNSSVESYPCPKCPEPILPSNDKQSLLANSIRDRFSVSSWAGDYLKSFKKQNSNSNNNNNDNNNPKSNGITNGINGTHINNATSPEFYTNLDSIKSNGIHHHHHHSNNSNNNNIINPSLLEETPPLSHLNSNPYGLASRKHEHEDTVIQLNSGTNSNISNNIHGNNKIYDDDYDKYNKRPVNPISKIINNIKETKPKYLIMITVAIIVFLILISKMGSNSDSNDNIVGDNNNNNNNININNDNNGGNGAINEETLNDQKIPNNGQ.

Residues Met1–Trp41 form a B box-type; degenerate zinc finger. An RING-type; atypical zinc finger spans residues Cys52–Pro103. Disordered stretches follow at residues Lys139–His167 and Gly187–Leu225. A compositionally biased stretch (low complexity) spans Asn196–Asn205. A helical transmembrane segment spans residues Tyr287 to Ser307. Residues Ile326–Gln354 are disordered.

This sequence belongs to the ZFPL1 family.

It is found in the membrane. This chain is Zinc finger protein-like 1 homolog (zfpl1), found in Dictyostelium discoideum (Social amoeba).